The sequence spans 495 residues: Membrane-bound glycerophospholipid O-acyltransferase 1 (495 aa).

Transmembrane regions (helical) follow at residues 34–54 (VNFV…RIYL), 70–90 (IFGI…LFVL), 126–146 (IYIF…MIVT), 180–200 (PSFL…AGPC), 238–258 (TGAV…FLTL), and 297–317 (YFAW…FSGV). Active-site residues include Asn350 and His381. A run of 3 helical transmembrane segments spans residues 371–391 (VLTF…YFTF), 426–446 (TWAV…MLAV), and 450–470 (ISLY…IILF). Position 488 is a phosphoserine (Ser488).

The protein belongs to the membrane-bound acyltransferase family. As to expression, expressed in neutrophils.

It is found in the endoplasmic reticulum membrane. The enzyme catalyses a 1-acyl-sn-glycero-3-phospho-L-serine + an acyl-CoA = a 1,2-diacyl-sn-glycero-3-phospho-L-serine + CoA. The catalysed reaction is a 1-acyl-sn-glycero-3-phosphocholine + an acyl-CoA = a 1,2-diacyl-sn-glycero-3-phosphocholine + CoA. It catalyses the reaction a 1-acyl-sn-glycero-3-phosphoethanolamine + an acyl-CoA = a 1,2-diacyl-sn-glycero-3-phosphoethanolamine + CoA. It carries out the reaction 1-(9Z-octadecenoyl)-sn-glycero-3-phospho-L-serine + (9Z)-octadecenoyl-CoA = 1,2-di-(9Z)-octadecenoyl-sn-glycero-3-phospho-L-serine + CoA. The enzyme catalyses 1-(9Z-octadecenoyl)-sn-glycero-3-phospho-L-serine + octadecanoyl-CoA = 1-(9Z-octadecenoyl)-2-octadecanoyl-sn-glycero-3-phospho-L-serine + CoA. The catalysed reaction is 1-(9Z-octadecenoyl)-sn-glycero-3-phospho-L-serine + (9Z)-hexadecenoyl-CoA = 1-(9Z-octadecenoyl)-2-(9Z-hexadecenoyl)-sn-glycero-3-phospho-L-serine + CoA. It catalyses the reaction 1-(9Z-octadecenoyl)-sn-glycero-3-phospho-L-serine + (9Z,12Z)-octadecadienoyl-CoA = 1-(9Z-octadecenoyl)-2-(9Z,12Z-octadienoyl)-sn-glycero-3-phospho-L-serine + CoA. It carries out the reaction 1-hexadecanoyl-sn-glycero-3-phosphocholine + (9Z)-octadecenoyl-CoA = 1-hexadecanoyl-2-(9Z-octadecenoyl)-sn-glycero-3-phosphocholine + CoA. The enzyme catalyses a 1-O-(1Z-alkenyl)-sn-glycero-3-phosphoethanolamine + (9Z)-octadecenoyl-CoA = 1-O-(1Z)-alkenyl-2-(9Z)-octadecenoyl-sn-glycero-3-phosphoethanolamine + CoA. The catalysed reaction is 1-octadecanoyl-sn-glycero-3-phosphoethanolamine + (9Z)-octadecenoyl-CoA = 1-octadecanoyl-2-(9Z-octadecenoyl)-sn-glycero-3-phosphoethanolamine + CoA. It catalyses the reaction 1-(9Z-octadecenoyl)-sn-glycero-3-phosphoethanolamine + (9Z)-octadecenoyl-CoA = 1,2-di-(9Z-octadecenoyl)-sn-glycero-3-phosphoethanolamine + CoA. It carries out the reaction 1-hexadecanoyl-sn-glycero-3-phosphoethanolamine + (9Z)-octadecenoyl-CoA = 1-hexadecanoyl-2-(9Z-octadecenoyl)-sn-glycero-3-phosphoethanolamine + CoA. The enzyme catalyses 1-(10Z-heptadecenoyl)-sn-glycero-3-phosphoethanolamine + hexadecanoyl-CoA = 1-(10Z-heptadecenoyl)-2-hexadecanoyl-sn-glycero-3-phosphoethanolamine + CoA. The catalysed reaction is 1-(10Z-heptadecenoyl)-sn-glycero-3-phosphoethanolamine + (9Z)-octadecenoyl-CoA = 1-(10Z-heptadecenoyl)-2-(9Z-octadecenoyl)-sn-glycero-3-phosphoethanolamine + CoA. Its pathway is lipid metabolism; phospholipid metabolism. Partially inhibited by thimerosal. Its function is as follows. Acyltransferase which catalyzes the transfer of an acyl group from an acyl-CoA towards a lysophospholipid producing a phospholipid and participates in the reacylation step of the phospholipid remodeling pathway also known as the Lands cycle. Acts on lysophosphatidylserine (1-acyl-2-hydroxy-sn-glycero-3-phospho-L-serine or LPS) and lysophosphatidylethanolamine (1-acyl-sn-glycero-3-phosphoethanolamine or LPE), and to a lesser extend lysophosphatidylcholine. Prefers oleoyl-CoA as the acyl donor and 1-oleoyl-LPE as acceptor. May play a role in neurite outgrowth during neuronal differentiation. The sequence is that of Membrane-bound glycerophospholipid O-acyltransferase 1 from Homo sapiens (Human).